A 1877-amino-acid polypeptide reads, in one-letter code: Phosphatidylinositol 4-kinase stt4 (1877 aa).

Positions 1305 to 1491 (PDSDAASSPI…KPILDRVMDK (187 aa)) constitute a PIK helical domain. The interval 1492 to 1625 (MINSLSGEDK…EVWQSAIFKV (134 aa)) is pleckstrin homology (PH) domain conferring phosphoinositide binding specificity. A PI3K/PI4K catalytic domain is found at 1593-1861 (DPEELAVNGT…LIEQSYANKR (269 aa)). A G-loop region spans residues 1599 to 1605 (VNGTEEE). The segment at 1728–1736 (QFKDRHNGN) is catalytic loop. The tract at residues 1747-1771 (HIDFGFIFDIAPGGITFESAPFKLT) is activation loop.

The protein belongs to the PI3/PI4-kinase family. Type III PI4K subfamily.

It is found in the cytoplasm. The enzyme catalyses a 1,2-diacyl-sn-glycero-3-phospho-(1D-myo-inositol) + ATP = a 1,2-diacyl-sn-glycero-3-phospho-(1D-myo-inositol 4-phosphate) + ADP + H(+). Functionally, acts on phosphatidylinositol (PI) in the first committed step in the production of the second messenger inositol 1,4,5,-trisphosphate. This chain is Phosphatidylinositol 4-kinase stt4 (stt4), found in Schizosaccharomyces pombe (strain 972 / ATCC 24843) (Fission yeast).